A 279-amino-acid polypeptide reads, in one-letter code: Large ribosomal subunit protein uL2 (279 aa).

Basic residues-rich tracts occupy residues 211 to 221 (GRSRWRGKTPH) and 256 to 279 (SYGKKTRDKKKPSTKFIVRGRKGK). Residues 211–279 (GRSRWRGKTP…KFIVRGRKGK (69 aa)) form a disordered region.

The protein belongs to the universal ribosomal protein uL2 family. As to quaternary structure, part of the 50S ribosomal subunit. Forms a bridge to the 30S subunit in the 70S ribosome.

One of the primary rRNA binding proteins. Required for association of the 30S and 50S subunits to form the 70S ribosome, for tRNA binding and peptide bond formation. It has been suggested to have peptidyltransferase activity; this is somewhat controversial. Makes several contacts with the 16S rRNA in the 70S ribosome. This Oenococcus oeni (strain ATCC BAA-331 / PSU-1) protein is Large ribosomal subunit protein uL2.